Here is a 259-residue protein sequence, read N- to C-terminus: Phosphatidylglycerol--prolipoprotein diacylglyceryl transferase (259 aa).

Transmembrane regions (helical) follow at residues 16-36 (FAISWYSLSYVIGILLGWFYA), 55-75 (FITYAVIGIIVGGRLGFVLLY), 92-112 (QGGMSFHGGALGVIIAAYLFC), and 117-137 (VNFLSLTDIIATVVPIGLFLG). Arg-138 serves as a coordination point for a 1,2-diacyl-sn-glycero-3-phospho-(1'-sn-glycerol). The next 3 membrane-spanning stretches (helical) occupy residues 172–192 (QLYEAFFEGLVLFCILAYATF), 201–221 (ALNLGLFLTFYALFRITIEIF), and 228–248 (IGFILDSLTMGQILSIPMLIL).

It belongs to the Lgt family.

Its subcellular location is the cell inner membrane. It carries out the reaction L-cysteinyl-[prolipoprotein] + a 1,2-diacyl-sn-glycero-3-phospho-(1'-sn-glycerol) = an S-1,2-diacyl-sn-glyceryl-L-cysteinyl-[prolipoprotein] + sn-glycerol 1-phosphate + H(+). It participates in protein modification; lipoprotein biosynthesis (diacylglyceryl transfer). Catalyzes the transfer of the diacylglyceryl group from phosphatidylglycerol to the sulfhydryl group of the N-terminal cysteine of a prolipoprotein, the first step in the formation of mature lipoproteins. This chain is Phosphatidylglycerol--prolipoprotein diacylglyceryl transferase, found in Rickettsia canadensis (strain McKiel).